The following is a 568-amino-acid chain: Tyrosine-protein kinase transforming protein Src (568 aa).

A disordered region spans residues M1–P58. G2 is lipidated: N-myristoyl glycine; by host. Positions K7–H25 are enriched in basic and acidic residues. The SH3 domain maps to G81–S142. In terms of domain architecture, SH2 spans W148–C245. Residues L267 to F520 form the Protein kinase domain. ATP is bound by residues L273–V281 and K295. D386 acts as the Proton acceptor in catalysis. Phosphotyrosine; by autocatalysis is present on Y416.

This sequence belongs to the protein kinase superfamily. Tyr protein kinase family. SRC subfamily. The phosphorylated form is termed pp60v-src.

It carries out the reaction L-tyrosyl-[protein] + ATP = O-phospho-L-tyrosyl-[protein] + ADP + H(+). This phosphoprotein, required for both the initiation and the maintenance of neoplastic transformation, is a protein kinase that catalyzes the phosphorylation of tyrosine residues in vitro. This chain is Tyrosine-protein kinase transforming protein Src (V-SRC), found in Galliformes.